Here is a 196-residue protein sequence, read N- to C-terminus: MEIKLNKYIDHTLLKPEATKQDIINLCNQAIQYDFATVCVNTCWTSLCKELLKNSNVGITNVVGFPLGACLTEVKVFETKKAIENGCDEIDMVLNIGALKDKDYDLVLNDMKEVKKAANEHVVKVILENCLLTKQEIIKACELAVQAGLEFVKTSTGFNKSGANVKDVKLMSEVVKTKLKLKLLVELELMMMQSQW.

D91 (proton donor/acceptor) is an active-site residue. Catalysis depends on K153, which acts as the Schiff-base intermediate with acetaldehyde. K182 (proton donor/acceptor) is an active-site residue.

It belongs to the DeoC/FbaB aldolase family. DeoC type 1 subfamily.

It is found in the cytoplasm. It carries out the reaction 2-deoxy-D-ribose 5-phosphate = D-glyceraldehyde 3-phosphate + acetaldehyde. The protein operates within carbohydrate degradation; 2-deoxy-D-ribose 1-phosphate degradation; D-glyceraldehyde 3-phosphate and acetaldehyde from 2-deoxy-alpha-D-ribose 1-phosphate: step 2/2. In terms of biological role, catalyzes a reversible aldol reaction between acetaldehyde and D-glyceraldehyde 3-phosphate to generate 2-deoxy-D-ribose 5-phosphate. The polypeptide is Deoxyribose-phosphate aldolase (Mycoplasma mycoides subsp. mycoides SC (strain CCUG 32753 / NCTC 10114 / PG1)).